We begin with the raw amino-acid sequence, 239 residues long: Lactate utilization protein A 1 (239 aa).

The protein belongs to the LutA/YkgE family.

Its function is as follows. Is involved in L-lactate degradation and allows cells to grow with lactate as the sole carbon source. The protein is Lactate utilization protein A 1 of Bacillus anthracis (strain A0248).